The sequence spans 335 residues: Phospho-N-acetylmuramoyl-pentapeptide-transferase (335 aa).

The next 9 membrane-spanning stretches (helical) occupy residues Pro-2 to Val-22, Ile-55 to Leu-75, Cys-77 to Trp-97, Phe-118 to Gly-137, Leu-153 to Gly-173, Val-193 to Ile-213, Ile-238 to Leu-258, Phe-263 to Val-283, and Val-313 to Phe-333.

Belongs to the glycosyltransferase 4 family. MraY subfamily. The cofactor is Mg(2+).

It localises to the cell inner membrane. The catalysed reaction is UDP-N-acetyl-alpha-D-muramoyl-L-alanyl-gamma-D-glutamyl-meso-2,6-diaminopimeloyl-D-alanyl-D-alanine + di-trans,octa-cis-undecaprenyl phosphate = di-trans,octa-cis-undecaprenyl diphospho-N-acetyl-alpha-D-muramoyl-L-alanyl-D-glutamyl-meso-2,6-diaminopimeloyl-D-alanyl-D-alanine + UMP. It functions in the pathway cell wall biogenesis; peptidoglycan biosynthesis. In terms of biological role, catalyzes the initial step of the lipid cycle reactions in the biosynthesis of the cell wall peptidoglycan: transfers peptidoglycan precursor phospho-MurNAc-pentapeptide from UDP-MurNAc-pentapeptide onto the lipid carrier undecaprenyl phosphate, yielding undecaprenyl-pyrophosphoryl-MurNAc-pentapeptide, known as lipid I. The sequence is that of Phospho-N-acetylmuramoyl-pentapeptide-transferase from Chlamydia muridarum (strain MoPn / Nigg).